A 231-amino-acid chain; its full sequence is Large ribosomal subunit protein uL1 (231 aa).

The protein belongs to the universal ribosomal protein uL1 family. As to quaternary structure, part of the 50S ribosomal subunit.

In terms of biological role, binds directly to 23S rRNA. The L1 stalk is quite mobile in the ribosome, and is involved in E site tRNA release. Functionally, protein L1 is also a translational repressor protein, it controls the translation of the L11 operon by binding to its mRNA. This chain is Large ribosomal subunit protein uL1, found in Thiobacillus denitrificans (strain ATCC 25259 / T1).